The sequence spans 382 residues: Calcium/calmodulin-dependent protein kinase (382 aa).

Residues Tyr23–Leu278 form the Protein kinase domain. ATP-binding positions include Leu29 to Val37 and Lys50. Asp142 serves as the catalytic Proton acceptor. The calmodulin-binding stretch occupies residues Glu291 to Leu301. Disordered regions lie at residues Lys318–Ser344 and Gln359–Ala382.

The protein belongs to the protein kinase superfamily. CAMK Ser/Thr protein kinase family. CaMK subfamily.

It carries out the reaction L-seryl-[protein] + ATP = O-phospho-L-seryl-[protein] + ADP + H(+). The enzyme catalyses L-threonyl-[protein] + ATP = O-phospho-L-threonyl-[protein] + ADP + H(+). This chain is Calcium/calmodulin-dependent protein kinase, found in Metarhizium anisopliae (Entomophthora anisopliae).